We begin with the raw amino-acid sequence, 127 residues long: Methylglyoxal synthase (127 aa).

In terms of domain architecture, MGS-like spans methionine 1–aspartate 127. Substrate is bound by residues histidine 12, lysine 16, threonine 38 to threonine 41, and serine 59 to glycine 60. Catalysis depends on aspartate 65, which acts as the Proton donor/acceptor. Substrate is bound at residue histidine 92.

This sequence belongs to the methylglyoxal synthase family.

It carries out the reaction dihydroxyacetone phosphate = methylglyoxal + phosphate. Its function is as follows. Catalyzes the formation of methylglyoxal from dihydroxyacetone phosphate. The protein is Methylglyoxal synthase of Agrobacterium fabrum (strain C58 / ATCC 33970) (Agrobacterium tumefaciens (strain C58)).